The primary structure comprises 192 residues: Adenylate kinase (192 aa).

10 to 15 is an ATP binding site; that stretch reads GAGKGT. The NMP stretch occupies residues 30 to 59; sequence STGDMLRTAVAQATEVGKRAKAVMDAGQLV. Residues Thr31, Arg36, 57–59, 85–88, and Gln92 each bind AMP; these read QLV and GYPR. The LID stretch occupies residues 126–142; the sequence is NRVTETVAAGGTVRSDD. Arg127 is an ATP binding site. Positions 139 and 150 each coordinate AMP. Residue Ala178 participates in ATP binding.

Belongs to the adenylate kinase family. As to quaternary structure, monomer.

It is found in the cytoplasm. It carries out the reaction AMP + ATP = 2 ADP. It participates in purine metabolism; AMP biosynthesis via salvage pathway; AMP from ADP: step 1/1. Its function is as follows. Catalyzes the reversible transfer of the terminal phosphate group between ATP and AMP. Plays an important role in cellular energy homeostasis and in adenine nucleotide metabolism. This is Adenylate kinase from Rhizobium meliloti (strain 1021) (Ensifer meliloti).